The primary structure comprises 114 residues: uncharacterized protein (114 aa).

Residues 18–29 (TRKRNSHKKVTK) are compositionally biased toward basic residues. Disordered regions lie at residues 18–47 (TRKR…RRTG) and 65–108 (SRPR…KLLN). Over residues 30–41 (RAVEKRKQDSTR) the composition is skewed to basic and acidic residues.

This is an uncharacterized protein from Homo sapiens (Human).